Consider the following 502-residue polypeptide: Probable mRNA-splicing protein ubp10 (502 aa).

Residues 56-153 (SQNLYLDTIN…YVMRPTFTKL (98 aa)) form a UBP-type; degenerate zinc finger. Residues Cys-89, Cys-92, His-108, and His-114 each contribute to the Zn(2+) site. One can recognise a USP domain in the interval 178–501 (VGMNNIKNND…ESFIQLWERS (324 aa)).

Belongs to the peptidase C19 family.

Its subcellular location is the nucleus. In terms of biological role, may play a role in mRNA splicing. It is unsure if the protein really exhibits hydrolase activity. Could be a competitor of ubiquitin C-terminal hydrolases (UCHs). The polypeptide is Probable mRNA-splicing protein ubp10 (ubp10) (Schizosaccharomyces pombe (strain 972 / ATCC 24843) (Fission yeast)).